A 264-amino-acid polypeptide reads, in one-letter code: 2-hydroxyhexa-2,4-dienoate hydratase (264 aa).

Belongs to the hydratase/decarboxylase family.

It carries out the reaction (2Z,4Z)-2-hydroxyhexa-2,4-dienoate + H2O = 4-hydroxy-2-oxohexanoate. Functionally, involved in the catatabolism of testosterone. Catalyzes the hydration of 2-hydroxyhexa-2,4-dienoic acid to 4-hydroxy-2-oxohexanoic acid. In Comamonas testosteroni (Pseudomonas testosteroni), this protein is 2-hydroxyhexa-2,4-dienoate hydratase (tesE).